The sequence spans 706 residues: Solute carrier organic anion transporter family member 6C1 (706 aa).

The tract at residues 1-24 is disordered; sequence MAHVRNKKSDDKKAMVVAKEDTNK. Topologically, residues 1-94 are cytoplasmic; sequence MAHVRNKKSD…PFVQRFNNID (94 aa). The span at 7–24 shows a compositional bias: basic and acidic residues; it reads KKSDDKKAMVVAKEDTNK. Residues 95-118 form a helical membrane-spanning segment; the sequence is GFMTLYVAAVLIHGALFAVVDMTL. At 119–130 the chain is on the extracellular side; sequence NIYQVQFSLTRT. The chain crosses the membrane as a helical span at residues 131-151; it reads EWYLMDFSDYIASFVVAIIIA. Residues 152-159 are Cytoplasmic-facing; sequence HFGSKGNR. Residues 160 to 180 form a helical membrane-spanning segment; sequence TRWIAASCILMGLESMLFAFP. The Extracellular portion of the chain corresponds to 181–218; that stretch reads FFTYEIIIPGRQSIELCMEENEKRNIICGNSVPNRSKC. Residue Asn-214 is glycosylated (N-linked (GlcNAc...) asparagine). A helical transmembrane segment spans residues 219–241; the sequence is IYFHIAGQCIHGIAGMPIYILGI. Over 242 to 253 the chain is Cytoplasmic; the sequence is TFIFDHIPTSSC. A helical transmembrane segment spans residues 254-277; the sequence is GFYLAIGHSAYLIGYLLGMVGGLQ. Over 278-301 the chain is Extracellular; that stretch reads NFQPPPKEKTVEIEPAKVYQLLQS. The chain crosses the membrane as a helical span at residues 302–324; that stretch reads GWWKTFLIIAAISFCVSFMMVCF. The Cytoplasmic segment spans residues 325-374; it reads PTSLPGAHKLRLAKRKEPPTIDRRLKDMKIQPHLKGFLHNIWHILKNPLM. Residues 375–396 traverse the membrane as a helical segment; it reads LTQAICKVSEYLTFNTSLYFLP. Topologically, residues 397–410 are extracellular; that stretch reads HHLQTQFLITPGIA. Residues 411 to 432 form a helical membrane-spanning segment; it reads SLLTGAFVLPGGIIGHFLGGLI. At 433–445 the chain is on the cytoplasmic side; it reads VDRLEMTNKNKLK. Residues 446-466 traverse the membrane as a helical segment; that stretch reads FTLVTTVVSVGLFLLIFFVEC. The Extracellular segment spans residues 467–565; that stretch reads QTTTFAGINE…IAGTCDSDCL (99 aa). The Kazal-like domain occupies 485–540; the sequence is GNLTADCNEYCDCTTSLYTSICGRDEKEYFSPCFAGCKATKVSQTEKTYYNCSCIK. N-linked (GlcNAc...) asparagine glycosylation occurs at Asn-486. 3 cysteine pairs are disulfide-bonded: Cys-491/Cys-521, Cys-497/Cys-517, and Cys-506/Cys-538. A glycan (N-linked (GlcNAc...) asparagine) is linked at Asn-535. The helical transmembrane segment at 566–589 threads the bilayer; it reads KLPLFFAFYFSATVFSNMCSIPVI. Over 590-604 the chain is Cytoplasmic; sequence SIILQSVPANFTSLS. A helical membrane pass occupies residues 605–624; it reads LGVTYAIVKFVASVPAPLLF. The Extracellular portion of the chain corresponds to 625–652; that stretch reads RLSSAIACIYWDNNRCGGKERCWIYNKN. A helical transmembrane segment spans residues 653–675; that stretch reads ILVYEFMGIWMSSQLIIVLLNIY. At 676 to 706 the chain is on the cytoplasmic side; sequence AIQIHDVVVHGEITESKTTVKDVKEQKERKA.

This sequence belongs to the organo anion transporter (TC 2.A.60) family. As to quaternary structure, component of the CatSper complex or CatSpermasome composed of the core pore-forming members CATSPER1, CATSPER2, CATSPER3 and CATSPER4 as well as auxiliary members CATSPERB, CATSPERG2, CATSPERD, CATSPERE, CATSPERZ, C2CD6/CATSPERT, SLCO6C1, TMEM249, TMEM262 and EFCAB9. HSPA1 may be an additional auxiliary complex member. The core complex members CATSPER1, CATSPER2, CATSPER3 and CATSPER4 form a heterotetrameric channel. The auxiliary CATSPERB, CATSPERG2, CATSPERD and CATSPERE subunits form a pavilion-like structure over the pore which stabilizes the complex through interactions with CATSPER4, CATSPER3, CATSPER1 and CATSPER2 respectively. SLCO6C1 interacts with CATSPERE and TMEM262/CATSPERH interacts with CATSPERB, further stabilizing the complex. C2CD6/CATSPERT interacts at least with CATSPERD and is required for targeting the CatSper complex in the flagellar membrane.

The protein resides in the cell projection. The protein localises to the cilium. Its subcellular location is the flagellum membrane. Its function is as follows. Auxiliary component of the CatSper complex, a complex involved in sperm cell hyperactivation. The chain is Solute carrier organic anion transporter family member 6C1 from Mus musculus (Mouse).